Reading from the N-terminus, the 442-residue chain is Histidine--tRNA ligase (442 aa).

The tract at residues 416-442 (SGDETTVPVEEFPPEGGEELPTYEDYE) is disordered. Residues 427 to 442 (FPPEGGEELPTYEDYE) are compositionally biased toward acidic residues.

It belongs to the class-II aminoacyl-tRNA synthetase family.

It is found in the cytoplasm. The enzyme catalyses tRNA(His) + L-histidine + ATP = L-histidyl-tRNA(His) + AMP + diphosphate + H(+). The polypeptide is Histidine--tRNA ligase (Halorubrum lacusprofundi (strain ATCC 49239 / DSM 5036 / JCM 8891 / ACAM 34)).